Consider the following 382-residue polypeptide: Anhydro-N-acetylmuramic acid kinase (382 aa).

An ATP-binding site is contributed by 22–29 (GTSMDGVD).

It belongs to the anhydro-N-acetylmuramic acid kinase family.

It carries out the reaction 1,6-anhydro-N-acetyl-beta-muramate + ATP + H2O = N-acetyl-D-muramate 6-phosphate + ADP + H(+). It participates in amino-sugar metabolism; 1,6-anhydro-N-acetylmuramate degradation. It functions in the pathway cell wall biogenesis; peptidoglycan recycling. Catalyzes the specific phosphorylation of 1,6-anhydro-N-acetylmuramic acid (anhMurNAc) with the simultaneous cleavage of the 1,6-anhydro ring, generating MurNAc-6-P. Is required for the utilization of anhMurNAc either imported from the medium or derived from its own cell wall murein, and thus plays a role in cell wall recycling. This is Anhydro-N-acetylmuramic acid kinase from Burkholderia ambifaria (strain ATCC BAA-244 / DSM 16087 / CCUG 44356 / LMG 19182 / AMMD) (Burkholderia cepacia (strain AMMD)).